The chain runs to 433 residues: Putative zinc metalloprotease BB_0118 (433 aa).

His-17 contacts Zn(2+). The active site involves Glu-18. His-21 contributes to the Zn(2+) binding site. A helical membrane pass occupies residues 98-120 (ILIYFAGPLFNLIFSFIVFIFIS). The 73-residue stretch at 193–265 (TVSLQDFLKE…VVEIKFSRNG (73 aa)) folds into the PDZ domain. Helical transmembrane passes span 334 to 356 (VSGPVGIVGILSSSYSLGILYWI), 366 to 388 (LAGMNLFFIVIPIFDGGQIFISF), and 401 to 423 (TIYSFYSFGIFFGLFLFGLGLFN).

Belongs to the peptidase M50B family. Zn(2+) serves as cofactor.

It localises to the cell inner membrane. This chain is Putative zinc metalloprotease BB_0118, found in Borreliella burgdorferi (strain ATCC 35210 / DSM 4680 / CIP 102532 / B31) (Borrelia burgdorferi).